The sequence spans 184 residues: Probable cobalt-precorrin-6B C(15)-methyltransferase (decarboxylating) (184 aa).

S-adenosyl-L-methionine contacts are provided by residues Thr12, 36–40 (GCGTG), Asp59, and Ala87.

This sequence belongs to the methyltransferase superfamily. Archaeal-type CbiT family.

It catalyses the reaction Co-precorrin-6B + S-adenosyl-L-methionine = Co-precorrin-7 + S-adenosyl-L-homocysteine + CO2. It participates in cofactor biosynthesis; adenosylcobalamin biosynthesis; cob(II)yrinate a,c-diamide from sirohydrochlorin (anaerobic route): step 8/10. Catalyzes the methylation of C-15 in cobalt-precorrin-6B followed by the decarboxylation of C-12 to form cobalt-precorrin-7. This Methanosarcina mazei (strain ATCC BAA-159 / DSM 3647 / Goe1 / Go1 / JCM 11833 / OCM 88) (Methanosarcina frisia) protein is Probable cobalt-precorrin-6B C(15)-methyltransferase (decarboxylating).